We begin with the raw amino-acid sequence, 553 residues long: Protein TIC 55, chloroplastic (553 aa).

Residues 1 to 60 (MALALASANSFLLPTKTHFALHVSPPPSKKTLLCTNPSSNFSFNKALSSRRRKQAWCVAA) constitute a chloroplast transit peptide. Residues 61–492 (AADVKDATLL…GCSSAIKAFQ (432 aa)) lie on the Stromal side of the membrane. Residues 103 to 208 (WYPLYLTKNV…VRDSQGVLWV (106 aa)) form the Rieske domain. The [2Fe-2S] cluster site is built by Cys-144, His-146, Cys-163, and His-166. 2 residues coordinate Fe cation: His-257 and His-262. The helical transmembrane segment at 493-513 (IWKNVLSGVVVALAALAILVS) threads the bilayer. The Chloroplast intermembrane segment spans residues 514 to 518 (GRQWK). Residues 519-539 (VLLLASASLCSVGVYACSTAI) form a helical membrane-spanning segment. Residues 540 to 553 (AMNTTNFIRVHRRL) lie on the Stromal side of the membrane.

Part of the Tic complex. Interacts with TIC62 and TIC110. Requires [2Fe-2S] cluster as cofactor.

It localises to the plastid. The protein localises to the chloroplast inner membrane. Involved in protein precursor import into chloroplasts. Part of the redox regulon consisting of TIC32, TIC 55 and TIC62. The protein is Protein TIC 55, chloroplastic (TIC55) of Pisum sativum (Garden pea).